A 448-amino-acid chain; its full sequence is Delta(14)-sterol reductase ERG24 (448 aa).

Transmembrane regions (helical) follow at residues 18 to 38 (ISGA…FYLL), 75 to 95 (CWSA…LLPG), 108 to 128 (VLNY…LLLA), 157 to 177 (IIIC…ISFI), 251 to 271 (VTDS…DGVL), 279 to 299 (MIDI…LAWV), and 318 to 338 (NLGW…FYIF). Residues K345, R349, L368, W373, and 380–381 (NY) each bind NADP(+). The helical transmembrane segment at 394 to 414 (PTGFQTPLTYFYVIYFASLLI) threads the bilayer. NADP(+) contacts are provided by residues D420, 424-428 (CRAKY), and Y435.

It belongs to the ERG4/ERG24 family.

It localises to the endoplasmic reticulum membrane. It catalyses the reaction 4,4-dimethyl-5alpha-cholesta-8,24-dien-3beta-ol + NADP(+) = 4,4-dimethyl-5alpha-cholesta-8,14,24-trien-3beta-ol + NADPH + H(+). The protein operates within steroid biosynthesis; zymosterol biosynthesis; zymosterol from lanosterol: step 2/6. Functionally, C-14 sterol reductase; part of the third module of ergosterol biosynthesis pathway that includes the late steps of the pathway. ERG24 reduces the C14=C15 double bond of 4,4-dimethyl-cholesta-8,14,24-trienol to produce 4,4-dimethyl-cholesta-8,24-dienol. The third module or late pathway involves the ergosterol synthesis itself through consecutive reactions that mainly occur in the endoplasmic reticulum (ER) membrane. Firstly, the squalene synthase ERG9 catalyzes the condensation of 2 farnesyl pyrophosphate moieties to form squalene, which is the precursor of all steroids. Squalene synthase is crucial for balancing the incorporation of farnesyl diphosphate (FPP) into sterol and nonsterol isoprene synthesis. Secondly, the squalene epoxidase ERG1 catalyzes the stereospecific oxidation of squalene to (S)-2,3-epoxysqualene, which is considered to be a rate-limiting enzyme in steroid biosynthesis. Then, the lanosterol synthase ERG7 catalyzes the cyclization of (S)-2,3 oxidosqualene to lanosterol, a reaction that forms the sterol core. In the next steps, lanosterol is transformed to zymosterol through a complex process involving various demethylation, reduction and desaturation reactions. The lanosterol 14-alpha-demethylase ERG11 (also known as CYP51) catalyzes C14-demethylation of lanosterol to produce 4,4'-dimethyl cholesta-8,14,24-triene-3-beta-ol, which is critical for ergosterol biosynthesis. The C-14 reductase ERG24 reduces the C14=C15 double bond of 4,4-dimethyl-cholesta-8,14,24-trienol to produce 4,4-dimethyl-cholesta-8,24-dienol. 4,4-dimethyl-cholesta-8,24-dienol is substrate of the C-4 demethylation complex ERG25-ERG26-ERG27 in which ERG25 catalyzes the three-step monooxygenation required for the demethylation of 4,4-dimethyl and 4alpha-methylsterols, ERG26 catalyzes the oxidative decarboxylation that results in a reduction of the 3-beta-hydroxy group at the C-3 carbon to an oxo group, and ERG27 is responsible for the reduction of the keto group on the C-3. ERG28 has a role as a scaffold to help anchor ERG25, ERG26 and ERG27 to the endoplasmic reticulum and ERG29 regulates the activity of the iron-containing C4-methylsterol oxidase ERG25. Then, the sterol 24-C-methyltransferase ERG6 catalyzes the methyl transfer from S-adenosyl-methionine to the C-24 of zymosterol to form fecosterol. The C-8 sterol isomerase ERG2 catalyzes the reaction which results in unsaturation at C-7 in the B ring of sterols and thus converts fecosterol to episterol. The sterol-C5-desaturase ERG3 then catalyzes the introduction of a C-5 double bond in the B ring to produce 5-dehydroepisterol. The C-22 sterol desaturase ERG5 further converts 5-dehydroepisterol into ergosta-5,7,22,24(28)-tetraen-3beta-ol by forming the C-22(23) double bond in the sterol side chain. Finally, ergosta-5,7,22,24(28)-tetraen-3beta-ol is substrate of the C-24(28) sterol reductase ERG4 to produce ergosterol. The polypeptide is Delta(14)-sterol reductase ERG24 (Candida albicans (strain SC5314 / ATCC MYA-2876) (Yeast)).